Here is a 132-residue protein sequence, read N- to C-terminus: Small ribosomal subunit protein uS8 (132 aa).

This sequence belongs to the universal ribosomal protein uS8 family. As to quaternary structure, part of the 30S ribosomal subunit. Contacts proteins S5 and S12.

Its function is as follows. One of the primary rRNA binding proteins, it binds directly to 16S rRNA central domain where it helps coordinate assembly of the platform of the 30S subunit. In Heliobacterium modesticaldum (strain ATCC 51547 / Ice1), this protein is Small ribosomal subunit protein uS8.